Here is a 568-residue protein sequence, read N- to C-terminus: Protein NDNF (568 aa).

A signal peptide spans 1-19 (MELFYWCLLCLLLPLTSRT). Fibronectin type-III domains are found at residues 261 to 331 (NLGK…VGAF) and 445 to 564 (PSLP…IVKT). N-linked (GlcNAc...) asparagine glycans are attached at residues Asn-322 and Asn-488.

As to quaternary structure, binds heparin and chondroitin sulfate. O-glycosylated; contains heparan sulfate and chondroitin sulfate. In terms of processing, N-glycosylated. Expressed in brain and spinal cord with no expression detected in heart, kidney or liver. Expressed by neurons but not by astrocytes. In the brain, detected in the cerebrum, cerebellum and olfactory bulbs. In the cerebral cortex, highly expressed in Cajal-Retzius cells. Also expressed in hippocampal neurons and in Purkinje and granule cells of the cerebellum (at protein level). Expressed in neurons along the GnRH migratory route.

It localises to the secreted. In terms of biological role, secretory protein that plays a role in various cellular processes. Acts as a chemorepellent acting on gonadotropin-releasing hormone (GnRH) expressing neurons regulating their migration to the hypothalamus. Also promotes neuron migration, growth and survival as well as neurite outgrowth and is involved in the development of the olfactory system. May also act through the regulation of growth factors activity and downstream signaling. Also regulates extracellular matrix assembly and cell adhesiveness. Promotes endothelial cell survival, vessel formation and plays an important role in the process of revascularization through NOS3-dependent mechanisms. In Mus musculus (Mouse), this protein is Protein NDNF (Ndnf).